The primary structure comprises 586 residues: MVVGKIIKISGPVVVAEGMKGSQMFEVVKVGNEGLTGEIIQLTEDEAIIQVYEETAGIKPGEGVEGTGAPLSVELGPGMLKAMYDGIQRPLNEIENATDSIYIPRGVSVPSISRDIKWDFEATAAVGDEVITGDVIGTVQETASIVHKIMIPLGISGKIKEIKSGSFTVEETVAVVETAEGEKEVQMMQKWPVRKPRPSKGKQPPVIPLITGQRVEDTFFGVAKGGAAAIPGPFGSGKTVTQHQLAKWSDVDVVVYIGCGERGNEMTEVIEEFPHLDDIKTGNKLMDRTVLIANTSNMPVAAREASVYTGITIAEYFRDQGLGVLLTADSTSRWAEAMREISGRLEEMPGEEGYPAYLSSKLAQFYERAGRVQCLGSEDKHGFVCIVGAVSPPGGDFSEPVTSNTLRIVKVFWALDANLARRRHFPAINWLTSYSLYIDDIAGWWQENTAADWRSLRDEAMTLLQKEAELQEIVQLVGPDALPDRERVILEIARMLREDFLQQDAYHEVDSYCSPLKQYNMLKIIMTYYTKALDAVAKGADPAGISAVTVKGDIARMKYLTDDEFINTKVPEIINKMESELGALIK.

232 to 239 contacts ATP; the sequence is GPFGSGKT.

The protein belongs to the ATPase alpha/beta chains family. As to quaternary structure, has multiple subunits with at least A(3), B(3), C, D, E, F, H, I and proteolipid K(x).

The protein localises to the cell membrane. The enzyme catalyses ATP + H2O + 4 H(+)(in) = ADP + phosphate + 5 H(+)(out). Its function is as follows. Component of the A-type ATP synthase that produces ATP from ADP in the presence of a proton gradient across the membrane. The A chain is the catalytic subunit. The sequence is that of A-type ATP synthase subunit A from Methanococcus maripaludis (strain C5 / ATCC BAA-1333).